Here is a 294-residue protein sequence, read N- to C-terminus: Antiviral protein alpha (294 aa).

Residues methionine 1–alanine 24 form the signal peptide. 2 disulfides stabilise this stretch: cysteine 58–cysteine 282 and cysteine 108–cysteine 130. Glutamate 199 is a catalytic residue. A propeptide spanning residues tyrosine 286–leucine 294 is cleaved from the precursor.

It belongs to the ribosome-inactivating protein family. Type 1 RIP subfamily. As to quaternary structure, monomer.

It is found in the secreted. It localises to the cell wall. It catalyses the reaction Endohydrolysis of the N-glycosidic bond at one specific adenosine on the 28S rRNA.. In terms of biological role, inhibits viral infection of plants, and protein synthesis in vitro. Has also been shown to inhibit the replication of mammalian viruses. The protein may provide a means of cellular suicide upon invasion by a virus. The sequence is that of Antiviral protein alpha from Phytolacca americana (American pokeweed).